Here is a 478-residue protein sequence, read N- to C-terminus: tRNA(Ile)-lysidine synthase (478 aa).

An ATP-binding site is contributed by 27–32; that stretch reads SGGSDS.

The protein belongs to the tRNA(Ile)-lysidine synthase family.

The protein localises to the cytoplasm. It catalyses the reaction cytidine(34) in tRNA(Ile2) + L-lysine + ATP = lysidine(34) in tRNA(Ile2) + AMP + diphosphate + H(+). Functionally, ligates lysine onto the cytidine present at position 34 of the AUA codon-specific tRNA(Ile) that contains the anticodon CAU, in an ATP-dependent manner. Cytidine is converted to lysidine, thus changing the amino acid specificity of the tRNA from methionine to isoleucine. This chain is tRNA(Ile)-lysidine synthase, found in Rickettsia africae (strain ESF-5).